A 408-amino-acid chain; its full sequence is Neutral cholesterol ester hydrolase 1 (408 aa).

The Cytoplasmic portion of the chain corresponds to 1–4 (MRSS). Residues 5–25 (CVLLAALLALAAYYVYIPLPS) traverse the membrane as a helical; Signal-anchor for type II membrane protein segment. Residues 26–408 (AVSDPWKLML…SYIKWLDQNL (383 aa)) are Lumenal-facing. Residues 113–115 (HGG) carry the Involved in the stabilization of the negatively charged intermediate by the formation of the oxyanion hole motif. The active site involves Ser191. N-linked (GlcNAc...) asparagine glycosylation is present at Asn270. Asp348 is a catalytic residue. Residue Asn367 is glycosylated (N-linked (GlcNAc...) asparagine). His378 is an active-site residue. Residue Asn389 is glycosylated (N-linked (GlcNAc...) asparagine).

This sequence belongs to the 'GDXG' lipolytic enzyme family. In terms of processing, N-glycosylated. Present in brain, heart, kidney, lung, spinal cord and testis but not liver (at protein level). Expressed in peritoneal macrophages and kidney.

It localises to the cell membrane. Its subcellular location is the microsome. The enzyme catalyses a 1-O-alkyl-2-acetyl-sn-glycerol + H2O = a 1-O-alkyl-sn-glycerol + acetate + H(+). It catalyses the reaction 1-O-hexadecyl-2-acetyl-sn-glycerol + H2O = 1-O-hexadecyl-sn-glycerol + acetate + H(+). It carries out the reaction a cholesterol ester + H2O = cholesterol + a fatty acid + H(+). The catalysed reaction is cholesteryl (9Z-octadecenoate) + H2O = cholesterol + (9Z)-octadecenoate + H(+). With respect to regulation, inhibited by bulky trifluoromethyl ketones. Its function is as follows. Hydrolyzes 2-acetyl monoalkylglycerol ether (1-O-alkyl-2-acetyl-sn-glycerol), the penultimate precursor of the pathway for de novo synthesis of platelet-activating factor. May be responsible for the hydrolysis of cholesterol esters (such as cholesteryl (9Z-octadecenoate)) in macrophages. Also involved in organ detoxification by hydrolyzing exogenous organophosphorus compounds. This Mus musculus (Mouse) protein is Neutral cholesterol ester hydrolase 1 (Nceh1).